The chain runs to 328 residues: Malate dehydrogenase (328 aa).

G11–G17 contributes to the NAD(+) binding site. Substrate-binding residues include R92 and R98. NAD(+)-binding positions include N105, Q112, and V129–N131. Positions 131 and 162 each coordinate substrate. H187 functions as the Proton acceptor in the catalytic mechanism.

Belongs to the LDH/MDH superfamily. MDH type 2 family.

The catalysed reaction is (S)-malate + NAD(+) = oxaloacetate + NADH + H(+). Catalyzes the reversible oxidation of malate to oxaloacetate. The protein is Malate dehydrogenase of Coxiella burnetii (strain CbuG_Q212) (Coxiella burnetii (strain Q212)).